Reading from the N-terminus, the 451-residue chain is UDP-N-acetylmuramoylalanine--D-glutamate ligase (451 aa).

ATP is bound at residue 118-124 (GSNGKTT).

The protein belongs to the MurCDEF family.

The protein localises to the cytoplasm. It catalyses the reaction UDP-N-acetyl-alpha-D-muramoyl-L-alanine + D-glutamate + ATP = UDP-N-acetyl-alpha-D-muramoyl-L-alanyl-D-glutamate + ADP + phosphate + H(+). Its pathway is cell wall biogenesis; peptidoglycan biosynthesis. Its function is as follows. Cell wall formation. Catalyzes the addition of glutamate to the nucleotide precursor UDP-N-acetylmuramoyl-L-alanine (UMA). This Shouchella clausii (strain KSM-K16) (Alkalihalobacillus clausii) protein is UDP-N-acetylmuramoylalanine--D-glutamate ligase.